The primary structure comprises 138 residues: AGPQLDVSCFAHDKNIGSRTEQLSVVHVASAQDCMKECQALPTCSHFTYNKNSKKCHLKAGAPEFYTYTGDMTGPRSCEHNCSDACWMDGNNPLAVWDYSGQPPALCWAACMGTPGCDLYTFQGMTCKLYSQTSSKRA.

PAN domains follow at residues 9–78 (CFAH…PRSC) and 82–138 (CSDA…SKRA). Cystine bridges form between cysteine 9/cysteine 78, cysteine 34/cysteine 56, cysteine 38/cysteine 44, cysteine 82/cysteine 86, cysteine 107/cysteine 127, and cysteine 111/cysteine 117. Residue serine 18 coordinates a carbohydrate. 3 residues coordinate a carbohydrate: lysine 59, tyrosine 66, and aspartate 71.

Homodimer or heterodimer. Contains six disulfide bonds.

The protein resides in the cytoplasmic vesicle. The protein localises to the secretory vesicle. It is found in the microneme. Functionally, galactose-binding lectin. Plays a role in adhesion to the host cell. Has a potential role in invasion of host cells. This Sarcocystis muris protein is Microneme antigen L2.